The chain runs to 689 residues: Beta-adrenergic receptor kinase 1 (689 aa).

The N-terminal stretch occupies residues 1–190; the sequence is MADLEAVLAD…ELNIHLTMND (190 aa). One can recognise an RGS domain in the interval 54–175; sequence TFEKIFSQKL…IESDKFTRFC (122 aa). The 263-residue stretch at 191 to 453 folds into the Protein kinase domain; that stretch reads FSVHRIIGRG…AQEVKESPFF (263 aa). ATP is bound by residues 197 to 205 and lysine 220; that span reads IGRGGFGEV. Residue aspartate 317 is the Proton acceptor of the active site. In terms of domain architecture, AGC-kinase C-terminal spans 454 to 521; sequence RSLDWQMVFL…TISERWQQEV (68 aa). Residues 558-652 enclose the PH domain; that stretch reads DCIMHGYMSK…WKKELRDAYR (95 aa). Serine 670 is modified (phosphoserine).

It belongs to the protein kinase superfamily. AGC Ser/Thr protein kinase family. GPRK subfamily. As to quaternary structure, interacts with the heterodimer formed by GNB1 and GNG2. Interacts with GIT1. Interacts with, and phosphorylates chemokine-stimulated CCR5. Interacts with ARRB1. Interacts with LPAR1 and LPAR2. Interacts with RALA in response to LPAR1 activation. ADRBK1 and RALA mutually inhibit each other's binding to LPAR1. Interacts with ADRB2.

It is found in the cytoplasm. The protein localises to the cell membrane. Its subcellular location is the postsynapse. It localises to the presynapse. It carries out the reaction [beta-adrenergic receptor] + ATP = [beta-adrenergic receptor]-phosphate + ADP + H(+). With respect to regulation, in contrast to other AGC family kinases, the catalytic activity is solely regulated by the binding of substrates and ligands, not by phosphorylation of the kinase domain. In terms of biological role, specifically phosphorylates the agonist-occupied form of the beta-adrenergic and closely related receptors, probably inducing a desensitization of them. Key regulator of LPAR1 signaling. Competes with RALA for binding to LPAR1 thus affecting the signaling properties of the receptor. Desensitizes LPAR1 and LPAR2 in a phosphorylation-independent manner. Positively regulates ciliary smoothened (SMO)-dependent Hedgehog (Hh) signaling pathway by facilitating the trafficking of SMO into the cilium and the stimulation of SMO activity. Inhibits relaxation of airway smooth muscle in response to blue light. This is Beta-adrenergic receptor kinase 1 from Mesocricetus auratus (Golden hamster).